A 190-amino-acid polypeptide reads, in one-letter code: Large ribosomal subunit protein eL15 (190 aa).

Belongs to the eukaryotic ribosomal protein eL15 family.

This is Large ribosomal subunit protein eL15 (rpl15e) from Nanoarchaeum equitans (strain Kin4-M).